Here is a 165-residue protein sequence, read N- to C-terminus: Nucleotide-binding protein MXAN_1478 (165 aa).

This sequence belongs to the YajQ family.

Nucleotide-binding protein. The protein is Nucleotide-binding protein MXAN_1478 of Myxococcus xanthus (strain DK1622).